Consider the following 318-residue polypeptide: NADH-ubiquinone oxidoreductase chain 1 (318 aa).

Transmembrane regions (helical) follow at residues 2 to 22, 69 to 89, 100 to 120, 147 to 167, 171 to 191, 222 to 242, 253 to 273, and 294 to 314; these read PMIN…FLML, ALYI…WTPL, LGLL…LWSG, AIIL…TLIT, HIWL…STLA, LFFM…TMIF, ELYT…FLWI, and LPLT…IASI.

This sequence belongs to the complex I subunit 1 family. Core subunit of respiratory chain NADH dehydrogenase (Complex I) which is composed of 45 different subunits.

It is found in the mitochondrion inner membrane. It carries out the reaction a ubiquinone + NADH + 5 H(+)(in) = a ubiquinol + NAD(+) + 4 H(+)(out). Core subunit of the mitochondrial membrane respiratory chain NADH dehydrogenase (Complex I) which catalyzes electron transfer from NADH through the respiratory chain, using ubiquinone as an electron acceptor. Essential for the catalytic activity and assembly of complex I. This Hylobates lar (Lar gibbon) protein is NADH-ubiquinone oxidoreductase chain 1 (MT-ND1).